The chain runs to 353 residues: Histidine biosynthesis bifunctional protein HisB (353 aa).

Positions 1–164 (MKNKILFIDR…HITKYIIKHN (164 aa)) are histidinol-phosphatase. Asp-9 (nucleophile) is an active-site residue. Mg(2+) contacts are provided by Asp-9 and Asp-11. Asp-11 serves as the catalytic Proton donor. Residues Cys-93, His-95, Cys-101, and Cys-103 each coordinate Zn(2+). Asp-128 contributes to the Mg(2+) binding site. The imidazoleglycerol-phosphate dehydratase stretch occupies residues 165–353 (RYAEIIRRTK…NMLPTSKGIL (189 aa)).

This sequence in the N-terminal section; belongs to the histidinol-phosphatase family. It in the C-terminal section; belongs to the imidazoleglycerol-phosphate dehydratase family. It depends on Mg(2+) as a cofactor. Zn(2+) is required as a cofactor.

It is found in the cytoplasm. It carries out the reaction D-erythro-1-(imidazol-4-yl)glycerol 3-phosphate = 3-(imidazol-4-yl)-2-oxopropyl phosphate + H2O. The enzyme catalyses L-histidinol phosphate + H2O = L-histidinol + phosphate. It participates in amino-acid biosynthesis; L-histidine biosynthesis; L-histidine from 5-phospho-alpha-D-ribose 1-diphosphate: step 6/9. Its pathway is amino-acid biosynthesis; L-histidine biosynthesis; L-histidine from 5-phospho-alpha-D-ribose 1-diphosphate: step 8/9. In Buchnera aphidicola subsp. Acyrthosiphon pisum (strain Tuc7), this protein is Histidine biosynthesis bifunctional protein HisB.